Consider the following 35-residue polypeptide: Potassium channel toxin alpha-KTx 6.12 (35 aa).

At Q1 the chain carries Pyrrolidone carboxylic acid. 4 disulfide bridges follow: C4/C24, C10/C29, C14/C31, and C19/C34. K35 is subject to Lysine amide.

It belongs to the short scorpion toxin superfamily. Potassium channel inhibitor family. Alpha-KTx 06 subfamily. As to quaternary structure, monomer. As to expression, expressed by the venom gland.

The protein resides in the secreted. High affinity blocker of Kv1.3/KCNA3 channels of human T cells. Blocks Kv1.2/KCNA2 with an order of magnitude smaller than for Kv1.3/KCNA3. This Anuroctonus phaiodactylus (Mafia scorpion) protein is Potassium channel toxin alpha-KTx 6.12.